The primary structure comprises 160 residues: Myosin regulatory light chain, smooth muscle (160 aa).

Ser-1 carries the post-translational modification Blocked amino end (Ser). Residue Ser-11 is modified to Phosphoserine. 2 consecutive EF-hand domains span residues 20 to 55 (NQIQ…LGTA) and 88 to 123 (DPEE…MGDN). 4 residues coordinate Ca(2+): Asp-33, Asn-35, Asp-37, and Asp-44.

In terms of biological role, in molluscan muscle, calcium regulation is associated with myosin rather than with actin. Muscle myosin contains two types of light chains: the catalytic light chain, essential for ATPase activity, and the regulatory light chain, a calcium-binding protein responsible for Ca(2+) dependent binding and Ca(2+) dependent Mg-ATPase activity. This chain is Myosin regulatory light chain, smooth muscle, found in Spisula sachalinensis (Sakhalin surf-clam).